The primary structure comprises 405 residues: Tryptophan synthase beta chain (405 aa).

Residue K96 is modified to N6-(pyridoxal phosphate)lysine.

Belongs to the TrpB family. In terms of assembly, tetramer of two alpha and two beta chains. Requires pyridoxal 5'-phosphate as cofactor.

It catalyses the reaction (1S,2R)-1-C-(indol-3-yl)glycerol 3-phosphate + L-serine = D-glyceraldehyde 3-phosphate + L-tryptophan + H2O. Its pathway is amino-acid biosynthesis; L-tryptophan biosynthesis; L-tryptophan from chorismate: step 5/5. The beta subunit is responsible for the synthesis of L-tryptophan from indole and L-serine. The protein is Tryptophan synthase beta chain of Clostridium botulinum (strain Alaska E43 / Type E3).